The primary structure comprises 750 residues: Cation-transporting P-type ATPase B (750 aa).

Positions 17-80 (RRIQLDVAGM…VIEQAGYRAT (64 aa)) constitute an HMA domain. Positions 28 and 31 each coordinate a metal cation. The next 6 membrane-spanning stretches (helical) occupy residues 104-124 (LIVA…FAIV), 129-149 (FPGW…WAAW), 167-187 (ETLI…TIFV), 200-220 (AILH…VFVL), 360-380 (IAAV…ASWL), and 389-409 (AFSV…GLAT). Catalysis depends on D445, which acts as the 4-aspartylphosphate intermediate. The next 6 membrane-spanning stretches (helical) occupy residues 471-491 (VLAL…TAIV), 500-520 (VADF…EHHV), 547-567 (SRGE…AVAI), 663-683 (VAIG…VPVA), 693-713 (TIRI…PIAS), and 715-735 (GLLN…FVVS).

The protein belongs to the cation transport ATPase (P-type) (TC 3.A.3) family. Type IB subfamily.

The protein resides in the cell membrane. It catalyses the reaction ATP + H2O = ADP + phosphate + H(+). The chain is Cation-transporting P-type ATPase B (ctpB) from Mycobacterium leprae (strain TN).